The sequence spans 372 residues: ATP-sensitive inward rectifier potassium channel 1 (372 aa).

The Cytoplasmic segment spans residues 1–58; it reads MFKHLRRWFVTHIFGRSRQRARLVSKDGRCNIEFGNVDAQSRFIFFVDIWTTVLDLKW. The residue at position 25 (Ser25) is a Phosphoserine; by SGK1. Residues 59 to 83 traverse the membrane as a helical segment; the sequence is RYKMTVFITAFLGSWFLFGLLWYVV. Over 84-108 the chain is Extracellular; that stretch reads AYVHKDLPEFYPPDNRTPCVENING. An N-linked (GlcNAc...) asparagine glycan is attached at Asn98. The segment at residues 109-120 is an intramembrane region (helical; Pore-forming); that stretch reads MTSAFLFSLETQ. An intramembrane region (pore-forming) is located at residues 121-127; it reads VTIGYGF. A Selectivity filter motif is present at residues 122–127; that stretch reads TIGYGF. The Extracellular segment spans residues 128 to 136; it reads RFVTEQCAT. A helical transmembrane segment spans residues 137-158; it reads AIFLLIFQSILGVIINSFMCGA. Topologically, residues 159–372 are cytoplasmic; it reads ILAKISRPKK…EVDETDDTQM (214 aa). The tract at residues 161–188 is polyphosphoinositide (PIP2)-binding; sequence AKISRPKKRAKTITFSKNAVISKRGGKL. An ATP-binding site is contributed by 204-211; the sequence is GSHIYGKL.

This sequence belongs to the inward rectifier-type potassium channel (TC 1.A.2.1) family. KCNJ1 subfamily. As to quaternary structure, interacts with SGK1 and SLC9A3R2/NHERF2. Phosphorylation at Ser-25 by SGK1 is necessary for its expression at the cell membrane.

The protein localises to the cell membrane. It catalyses the reaction K(+)(in) = K(+)(out). Its activity is regulated as follows. Inhibited by WNK3. Activated by phosphatidylinositol 4,5 biphosphate (PtdIns(4,5)P2). Its function is as follows. Inward rectifier potassium channels are characterized by a greater tendency to allow potassium to flow into the cell rather than out of it. Their voltage dependence is regulated by the concentration of extracellular potassium; as external potassium is raised, the voltage range of the channel opening shifts to more positive voltages. The inward rectification is mainly due to the blockage of outward current by internal magnesium. This channel is activated by internal ATP and can be blocked by external barium. In the kidney, probably plays a major role in potassium homeostasis. In Mus musculus (Mouse), this protein is ATP-sensitive inward rectifier potassium channel 1 (Kcnj1).